The chain runs to 341 residues: Small ribosomal subunit biogenesis GTPase RsgA (341 aa).

The 157-residue stretch at 112–268 (RQQLIAANLD…LIDTPGMREL (157 aa)) folds into the CP-type G domain. GTP contacts are provided by residues 157-160 (TKVD) and 210-218 (GSSGAGKST). 4 residues coordinate Zn(2+): cysteine 290, cysteine 295, histidine 297, and cysteine 303.

This sequence belongs to the TRAFAC class YlqF/YawG GTPase family. RsgA subfamily. As to quaternary structure, monomer. Associates with 30S ribosomal subunit, binds 16S rRNA. Zn(2+) serves as cofactor.

It is found in the cytoplasm. Functionally, one of several proteins that assist in the late maturation steps of the functional core of the 30S ribosomal subunit. Helps release RbfA from mature subunits. May play a role in the assembly of ribosomal proteins into the subunit. Circularly permuted GTPase that catalyzes slow GTP hydrolysis, GTPase activity is stimulated by the 30S ribosomal subunit. In Xylella fastidiosa (strain Temecula1 / ATCC 700964), this protein is Small ribosomal subunit biogenesis GTPase RsgA.